Reading from the N-terminus, the 316-residue chain is Phospholipase A1 4 (316 aa).

The N-terminal stretch at 1–4 (ADDL) is a signal peptide. A propeptide spanning residues 5–14 (TTLRNGTLDR) is cleaved from the precursor. Residues Cys-20 and Cys-103 are joined by a disulfide bond. Ser-153 acts as the Nucleophile in catalysis. Asp-181 acts as the Charge relay system in catalysis. Disulfide bonds link Cys-192-Cys-197 and Cys-235-Cys-240. His-242 serves as the catalytic Charge relay system. Disulfide bonds link Cys-257–Cys-284, Cys-258–Cys-309, and Cys-277–Cys-282.

The protein belongs to the AB hydrolase superfamily. Lipase family. As to expression, expressed by the venom gland.

The protein resides in the secreted. It carries out the reaction a 1,2-diacyl-sn-glycero-3-phosphocholine + H2O = a 2-acyl-sn-glycero-3-phosphocholine + a fatty acid + H(+). Its function is as follows. Catalyzes the hydrolysis of phosphatidylcholine with phospholipase A1 activity. May act as an allergen and induce hemolytic activity. The protein is Phospholipase A1 4 of Polistes dominula (European paper wasp).